The following is a 315-amino-acid chain: Acetyl-coenzyme A carboxylase carboxyl transferase subunit alpha (315 aa).

Residues 39–292 (LEDKSAKLLR…GDALEQELNG (254 aa)) form the CoA carboxyltransferase C-terminal domain.

The protein belongs to the AccA family. As to quaternary structure, acetyl-CoA carboxylase is a heterohexamer composed of biotin carboxyl carrier protein (AccB), biotin carboxylase (AccC) and two subunits each of ACCase subunit alpha (AccA) and ACCase subunit beta (AccD).

Its subcellular location is the cytoplasm. It catalyses the reaction N(6)-carboxybiotinyl-L-lysyl-[protein] + acetyl-CoA = N(6)-biotinyl-L-lysyl-[protein] + malonyl-CoA. It participates in lipid metabolism; malonyl-CoA biosynthesis; malonyl-CoA from acetyl-CoA: step 1/1. Its function is as follows. Component of the acetyl coenzyme A carboxylase (ACC) complex. First, biotin carboxylase catalyzes the carboxylation of biotin on its carrier protein (BCCP) and then the CO(2) group is transferred by the carboxyltransferase to acetyl-CoA to form malonyl-CoA. This chain is Acetyl-coenzyme A carboxylase carboxyl transferase subunit alpha, found in Sphingopyxis alaskensis (strain DSM 13593 / LMG 18877 / RB2256) (Sphingomonas alaskensis).